Consider the following 372-residue polypeptide: Putative 8-amino-7-oxononanoate synthase (372 aa).

Arg-20 serves as a coordination point for substrate. 94–95 (GY) contacts pyridoxal 5'-phosphate. His-119 lines the substrate pocket. Residues Ser-167, 192 to 195 (DDAH), and 223 to 226 (TLSK) contribute to the pyridoxal 5'-phosphate site. Position 226 is an N6-(pyridoxal phosphate)lysine (Lys-226). Thr-337 lines the substrate pocket.

This sequence belongs to the class-II pyridoxal-phosphate-dependent aminotransferase family. BioF subfamily. In terms of assembly, homodimer. Pyridoxal 5'-phosphate serves as cofactor.

The catalysed reaction is 6-carboxyhexanoyl-[ACP] + L-alanine + H(+) = (8S)-8-amino-7-oxononanoate + holo-[ACP] + CO2. The protein operates within cofactor biosynthesis; biotin biosynthesis. In terms of biological role, catalyzes the decarboxylative condensation of pimeloyl-[acyl-carrier protein] and L-alanine to produce 8-amino-7-oxononanoate (AON), [acyl-carrier protein], and carbon dioxide. In Methanocaldococcus jannaschii (strain ATCC 43067 / DSM 2661 / JAL-1 / JCM 10045 / NBRC 100440) (Methanococcus jannaschii), this protein is Putative 8-amino-7-oxononanoate synthase (bioF).